A 97-amino-acid chain; its full sequence is Large ribosomal subunit protein uL23 (97 aa).

Belongs to the universal ribosomal protein uL23 family. Part of the 50S ribosomal subunit. Contacts protein L29, and trigger factor when it is bound to the ribosome.

Functionally, one of the early assembly proteins it binds 23S rRNA. One of the proteins that surrounds the polypeptide exit tunnel on the outside of the ribosome. Forms the main docking site for trigger factor binding to the ribosome. The protein is Large ribosomal subunit protein uL23 of Brucella canis (strain ATCC 23365 / NCTC 10854 / RM-666).